We begin with the raw amino-acid sequence, 430 residues long: Serine/threonine-protein kinase Sgk1 (430 aa).

Residues 1-60 form a necessary for localization to the mitochondria region; the sequence is MTVKTEAARSTLTYSRMRGMVAILIAFMKQRRMGLNDFIQKLANNSYACKHPEVQSYLKI. Residues 66–92 form a disordered region; the sequence is PELMNANPSPPPSPSQQINLGPSSNPH. Ser-74 bears the Phosphoserine mark. Ser-78 bears the Phosphoserine; by MAPK7 mark. Positions 81–91 are enriched in polar residues; the sequence is QQINLGPSSNP. One can recognise a Protein kinase domain in the interval 98–354; sequence FHFLKVIGKG…FMEIKSHIFF (257 aa). Residues 104 to 112 and Lys-127 each bind ATP; that span reads IGKGSFGKV. The short motif at 131–141 is the Nuclear localization signal element; that stretch reads KKAILKKKEEK. Asp-222 acts as the Proton acceptor in catalysis. The residue at position 256 (Thr-256) is a Phosphothreonine; by PDPK1. The region spanning 355 to 430 is the AGC-kinase C-terminal domain; sequence SLINWDDLIN…SYAPPMDSFL (76 aa). A Phosphothreonine; by PKA modification is found at Thr-368. Ser-396, Ser-400, and Ser-421 each carry phosphoserine.

Belongs to the protein kinase superfamily. AGC Ser/Thr protein kinase family. Homodimer; disulfide-linked. Forms a trimeric complex with FBXW7 and NOTCH1. Interacts with MAPK3/ERK1, MAPK1/ERK2, MAP2K1/MEK1, MAP2K2/MEK2, NEDD4, NEDD4L, MAPK7, CREB1, SLC9A3R2/NHERF2 and KCNJ1/ROMK1. Associates with the mammalian target of rapamycin complex 2 (mTORC2) via an interaction with MAPKAP1/SIN1. Interacts with MAPT/TAU. Regulated by phosphorylation. Activated by phosphorylation on Ser-421 by mTORC2, transforming it into a substrate for PDPK1 which phosphorylates it on Thr-256. Phosphorylation on Ser-396 and Ser-400 are also essential for its activity. Phosphorylation on Ser-78 by MAPK7 is required for growth factor-induced cell cycle progression. Post-translationally, ubiquitinated by NEDD4L; which promotes proteasomal degradation. Ubiquitinated by SYVN1 at the endoplasmic reticulum; which promotes rapid proteasomal degradation and maintains a high turnover rate in resting cells. In terms of tissue distribution, expressed in most tissues with highest levels in the ovary, thymus and lung. In the kidney, expressed within glomeruli of the cortex, at low levels in outer medulla and moderate levels in inner medulla and papilla.

The protein localises to the cytoplasm. It localises to the nucleus. It is found in the endoplasmic reticulum membrane. Its subcellular location is the cell membrane. The protein resides in the mitochondrion. It carries out the reaction L-seryl-[protein] + ATP = O-phospho-L-seryl-[protein] + ADP + H(+). The enzyme catalyses L-threonyl-[protein] + ATP = O-phospho-L-threonyl-[protein] + ADP + H(+). With respect to regulation, two specific sites, one in the kinase domain (Thr-256) and the other in the C-terminal regulatory region (Ser-421), need to be phosphorylated for its full activation. Phosphorylation at Ser-396 and Ser-400 are also essential for its activity. Activated by WNK1, WNK2, WNK3 and WNK4. Serine/threonine-protein kinase which is involved in the regulation of a wide variety of ion channels, membrane transporters, cellular enzymes, transcription factors, neuronal excitability, cell growth, proliferation, survival, migration and apoptosis. Plays an important role in cellular stress response. Contributes to regulation of renal Na(+) retention, renal K(+) elimination, salt appetite, gastric acid secretion, intestinal Na(+)/H(+) exchange and nutrient transport, insulin-dependent salt sensitivity of blood pressure, salt sensitivity of peripheral glucose uptake, cardiac repolarization and memory consolidation. Up-regulates Na(+) channels: SCNN1A/ENAC, SCN5A and ASIC1/ACCN2, K(+) channels: KCNJ1/ROMK1, KCNA1-5, KCNQ1-5 and KCNE1, epithelial Ca(2+) channels: TRPV5 and TRPV6, chloride channels: BSND, CLCN2 and CFTR, glutamate transporters: SLC1A3/EAAT1, SLC1A2 /EAAT2, SLC1A1/EAAT3, SLC1A6/EAAT4 and SLC1A7/EAAT5, amino acid transporters: SLC1A5/ASCT2, SLC38A1/SN1 and SLC6A19, creatine transporter: SLC6A8, Na(+)/dicarboxylate cotransporter: SLC13A2/NADC1, Na(+)-dependent phosphate cotransporter: SLC34A2/NAPI-2B, glutamate receptor: GRIK2/GLUR6. Up-regulates carriers: SLC9A3/NHE3, SLC12A1/NKCC2, SLC12A3/NCC, SLC5A3/SMIT, SLC2A1/GLUT1, SLC5A1/SGLT1 and SLC15A2/PEPT2. Regulates enzymes: GSK3A/B, PMM2 and Na(+)/K(+) ATPase, and transcription factors: CTNNB1 and nuclear factor NF-kappa-B. Stimulates sodium transport into epithelial cells by enhancing the stability and expression of SCNN1A/ENAC. This is achieved by phosphorylating the NEDD4L ubiquitin E3 ligase, promoting its interaction with 14-3-3 proteins, thereby preventing it from binding to SCNN1A/ENAC and targeting it for degradation. Regulates store-operated Ca(+2) entry (SOCE) by stimulating ORAI1 and STIM1. Regulates KCNJ1/ROMK1 directly via its phosphorylation or indirectly via increased interaction with SLC9A3R2/NHERF2. Phosphorylates MDM2 and activates MDM2-dependent ubiquitination of p53/TP53. Phosphorylates SLC2A4/GLUT4 and up-regulates its activity. Phosphorylates APBB1/FE65 and promotes its localization to the nucleus. Phosphorylates FBXW7 and plays an inhibitory role in the NOTCH1 signaling. Phosphorylates FOXO1 resulting in its relocalization from the nucleus to the cytoplasm. Phosphorylates FOXO3, promoting its exit from the nucleus and interference with FOXO3-dependent transcription. Phosphorylates BRAF and MAP3K3/MEKK3 and inhibits their activity. Phosphorylates SLC9A3/NHE3 in response to dexamethasone, resulting in its activation and increased localization at the cell membrane. Phosphorylates CREB1. Necessary for vascular remodeling during angiogenesis. Phosphorylates MAPT/TAU and mediates microtubule depolymerization and neurite formation in hippocampal neurons. Phosphorylates MAPK1/ERK2 and activates it by enhancing its interaction with MAP2K1/MEK1 and MAP2K2/MEK2. May also play an important role in the development of particular groups of neurons in the postnatal brain. The chain is Serine/threonine-protein kinase Sgk1 (Sgk1) from Rattus norvegicus (Rat).